Here is a 327-residue protein sequence, read N- to C-terminus: MTKEVLIHQIIDVLARAGFALSDRCNIRPRSFDVAARKDDTLLLCKVLFNIDGLNEETAREMKYLAEYLGGSAIVVGAKTRDQMLEDSVVYMRYDILALSVQTLYDYFVENIRPLVSAAPGGLYVSIEGDLLKKARTTQSMSLGTLASMVGVSRRTISKYEEEGMDASIDVVLHLEDIFGVELAKPIDILKSCGSRKPRKKAEPEKEEPKGKPGTLLPEDLILNTISMLGYDVLPTAQAPFKAISRDKSSVILTGVSEFNTTVIKRAHLMSSISCITETQSVFIINGRSKLKSVENTVLIEKKELDTISDSQELLDFIEERKDTHEA.

The HTH cro/C1-type domain maps to 132-190; it reads LKKARTTQSMSLGTLASMVGVSRRTISKYEEEGMDASIDVVLHLEDIFGVELAKPIDIL. A DNA-binding region (H-T-H motif) is located at residues 143–162; sequence LGTLASMVGVSRRTISKYEE. The disordered stretch occupies residues 195-214; the sequence is SRKPRKKAEPEKEEPKGKPG. Residues 201–211 are compositionally biased toward basic and acidic residues; that stretch reads KAEPEKEEPKG.

The sequence is that of Putative HTH-type transcriptional regulatory protein MM_0444 from Methanosarcina mazei (strain ATCC BAA-159 / DSM 3647 / Goe1 / Go1 / JCM 11833 / OCM 88) (Methanosarcina frisia).